The sequence spans 246 residues: 3'(2'),5'-bisphosphate nucleotidase CysQ (246 aa).

Residues E64, D83, L85, D86, and D205 each coordinate Mg(2+). E64 serves as a coordination point for substrate. Substrate contacts are provided by residues 85 to 88 and D205; that span reads LDGT.

The protein belongs to the inositol monophosphatase superfamily. CysQ family. The cofactor is Mg(2+).

It localises to the cell inner membrane. The enzyme catalyses adenosine 3',5'-bisphosphate + H2O = AMP + phosphate. Inhibited by lithium and calcium. Its function is as follows. Converts adenosine-3',5'-bisphosphate (PAP) to AMP. May also convert adenosine 3'-phosphate 5'-phosphosulfate (PAPS) to adenosine 5'-phosphosulfate (APS). Has 10000-fold lower activity towards inositol 1,4-bisphosphate (Ins(1,4)P2). This is 3'(2'),5'-bisphosphate nucleotidase CysQ from Escherichia coli (strain K12).